Reading from the N-terminus, the 629-residue chain is Keratin, type II cytoskeletal 3 (629 aa).

The tract at residues 1–182 is head; the sequence is MNRQVCKTSG…DPQIGQVRAQ (182 aa). A phosphoserine mark is found at S13 and S62. Residues 183 to 218 are coil 1A; the sequence is EREQIKTLNNKFASFIDKVRFLEQQNKVLETKWELL. The region spanning 183-498 is the IF rod domain; sequence EREQIKTLNN…KLLEGEESRM (316 aa). The interval 219–239 is linker 1; the sequence is QRQGPNSVTGTNNLEPLFENR. The coil 1B stretch occupies residues 240–331; the sequence is INYLRSYLDS…TLYDAELSQM (92 aa). Residue K281 is modified to N6,N6-dimethyllysine. The tract at residues 332 to 355 is linker 12; sequence QSHVSDMSVVLSMDNNRSLDLDSI. S349 is subject to Phosphoserine. The coil 2 stretch occupies residues 356-494; that stretch reads IAEVRAQYED…ATYRKLLEGE (139 aa). The interval 495 to 629 is tail; the sequence is ESRMSGECQS…FSQSSQRYSR (135 aa). The interval 603–629 is disordered; sequence SGGGFSSGSSSRGSSVKFSQSSQRYSR. The span at 618-629 shows a compositional bias: polar residues; sequence VKFSQSSQRYSR.

The protein belongs to the intermediate filament family. Heterotetramer of two type I and two type II keratins. Keratin-3 associates with keratin-12. As to expression, cornea specific. Expressed in the basal cells of corneal epithelium and stroma. Also expressed in esophageal epithelium.

The protein is Keratin, type II cytoskeletal 3 (KRT3) of Oryctolagus cuniculus (Rabbit).